The following is a 488-amino-acid chain: Tetratricopeptide repeat protein 23 (488 aa).

TPR repeat units follow at residues 45 to 78 (LHLC…TRIC), 137 to 170 (LELF…SKEM), 186 to 219 (SRIK…TEIT), 228 to 261 (VQVL…TPQP), and 398 to 431 (AETY…ETFL).

As to quaternary structure, associated with the EvC complex composed of EFCAB7, IQCE, EVC2 and EVC.

It is found in the cell projection. Its subcellular location is the cilium. Functionally, participates positively in the ciliary Hedgehog (Hh) signaling. In Mus musculus (Mouse), this protein is Tetratricopeptide repeat protein 23 (Ttc23).